The chain runs to 282 residues: Rhomboid protease GlpG (282 aa).

6 consecutive transmembrane segments (helical) span residues 96–116 (AGPL…WMQF), 144–164 (GLLH…WYLG), 176–196 (LFVI…LFSG), 197–217 (SHFG…WLTG), 225–242 (IGVP…LIVG), and 247–269 (FGLS…MALW). S203 (nucleophile) is an active-site residue. Residue H256 is part of the active site.

This sequence belongs to the peptidase S54 family.

It is found in the cell inner membrane. The catalysed reaction is Cleaves type-1 transmembrane domains using a catalytic dyad composed of serine and histidine that are contributed by different transmembrane domains.. Rhomboid-type serine protease that catalyzes intramembrane proteolysis. This Photorhabdus laumondii subsp. laumondii (strain DSM 15139 / CIP 105565 / TT01) (Photorhabdus luminescens subsp. laumondii) protein is Rhomboid protease GlpG.